A 523-amino-acid chain; its full sequence is Probable FAD synthase (523 aa).

The interval 20–111 (AIVVIGDEIL…TDQLHFSDEI (92 aa)) is molybdenum cofactor biosynthesis protein-like. Positions 332–489 (QIALSFNGGK…SLGGRDNTVK (158 aa)) are FAD synthase.

In the N-terminal section; belongs to the MoaB/Mog family. This sequence in the C-terminal section; belongs to the PAPS reductase family. FAD1 subfamily. Requires Mg(2+) as cofactor.

It catalyses the reaction FMN + ATP + H(+) = FAD + diphosphate. The protein operates within cofactor biosynthesis; FAD biosynthesis; FAD from FMN: step 1/1. Its function is as follows. Catalyzes the adenylation of flavin mononucleotide (FMN) to form flavin adenine dinucleotide (FAD) coenzyme. This is Probable FAD synthase from Caenorhabditis briggsae.